We begin with the raw amino-acid sequence, 87 residues long: MAHKKGTGSTRNGRDSRSQRLGVKRYGGQVVKAGNILIRQRGTKVHPGNNVGRGNDDTLFALIDGIVTFEYKTKSRRKVSVYPVAAE.

Residues 1 to 24 form a disordered region; it reads MAHKKGTGSTRNGRDSRSQRLGVK.

This sequence belongs to the bacterial ribosomal protein bL27 family.

This Crocosphaera subtropica (strain ATCC 51142 / BH68) (Cyanothece sp. (strain ATCC 51142)) protein is Large ribosomal subunit protein bL27.